The following is a 403-amino-acid chain: Forkhead box protein Q1 (403 aa).

Disordered regions lie at residues 1–75 (MKLE…PGAE) and 94–116 (GAAGPGAGGAGSGEGARSKPYTR). Over residues 32 to 48 (LSAAGDDSLGSDGDCAA) the composition is skewed to low complexity. Over residues 96-107 (AGPGAGGAGSGE) the composition is skewed to gly residues. Residues 119-214 (KPPYSYIALI…ADGVFRRRRK (96 aa)) constitute a DNA-binding region (fork-head). A disordered region spans residues 216 to 266 (LSHRAPVPAPGLRPEEAPGLPAAPPPAPAAPASPRMRSPARQEERASPAGK). The segment covering 236–246 (PAAPPPAPAAP) has biased composition (pro residues).

In terms of tissue distribution, expressed predominantly in the stomach, trachea, bladder and salivary gland.

Its subcellular location is the nucleus. Functionally, plays a role in hair follicle differentiation. The polypeptide is Forkhead box protein Q1 (FOXQ1) (Homo sapiens (Human)).